We begin with the raw amino-acid sequence, 212 residues long: Fibrillarin-like rRNA/tRNA 2'-O-methyltransferase (212 aa).

S-adenosyl-L-methionine contacts are provided by residues 73–74 (TT), 91–92 (EI), 116–117 (DA), and 136–139 (DVAQ).

This sequence belongs to the methyltransferase superfamily. Fibrillarin family. Interacts with nop5. Component of box C/D small ribonucleoprotein (sRNP) particles that contain rpl7ae, FlpA and nop5, plus a guide RNA.

Its function is as follows. Involved in pre-rRNA and tRNA processing. Utilizes the methyl donor S-adenosyl-L-methionine to catalyze the site-specific 2'-hydroxyl methylation of ribose moieties in rRNA and tRNA. Site specificity is provided by a guide RNA that base pairs with the substrate. Methylation occurs at a characteristic distance from the sequence involved in base pairing with the guide RNA. The protein is Fibrillarin-like rRNA/tRNA 2'-O-methyltransferase of Methanothrix thermoacetophila (strain DSM 6194 / JCM 14653 / NBRC 101360 / PT) (Methanosaeta thermophila).